Here is a 359-residue protein sequence, read N- to C-terminus: Acyl-CoA Delta-9 desaturase (359 aa).

The next 2 membrane-spanning stretches (helical) occupy residues 51–71 (VILFIYLHLAALYGAYLAFTS) and 74–94 (IATTIFAIILYQVSGVGITGG). Residues H96, H101, H133, H136, and H137 each coordinate Fe cation. Residues 96-101 (HRLWAH) carry the Histidine box-1 motif. The Histidine box-2 motif lies at 133 to 137 (HRVHH). 2 helical membrane-spanning segments follow: residues 194-214 (YLILMPIVCFLIPTTIPVYMW) and 222-244 (WFVATLFRYTFTLNMTWLVNSAA). Positions 245, 274, 277, and 278 each coordinate Fe cation. The short motif at 274–278 (HNYHH) is the Histidine box-3 element.

This sequence belongs to the fatty acid desaturase type 1 family. Fe(2+) is required as a cofactor.

The protein resides in the membrane. The catalysed reaction is octadecanoyl-CoA + 2 Fe(II)-[cytochrome b5] + O2 + 2 H(+) = (9Z)-octadecenoyl-CoA + 2 Fe(III)-[cytochrome b5] + 2 H2O. The enzyme catalyses hexadecanoyl-CoA + 2 Fe(II)-[cytochrome b5] + O2 + 2 H(+) = (9Z)-hexadecenoyl-CoA + 2 Fe(III)-[cytochrome b5] + 2 H2O. Catalyzes the formation of a Delta9 double bond, acting on saturated fatty acyl substrates like palmitoyl-CoA (hexadecanoyl-CoA) and stearoyl-CoA (octadecanoyl-CoA) with higher desaturation activity on octadecanoyl-CoA than hexadecanoyl-CoA. The chain is Acyl-CoA Delta-9 desaturase from Acheta domesticus (House cricket).